A 206-amino-acid chain; its full sequence is MAKIIGISGGSGSGKTTVVSKISEFIPEFVLISQDNYYKSVGDYEYEFSKVNFDHPDAFDNNLFYEHLKNLKKNSPIDMPLYDFINHKRQLKTVMVVPTPVIIVEGIMIFVEERVRNLIDLKIYIDTPNDIRFIRRLKRDISKRGRTLESVIDQYLNTTRWGYYRFIEPTKEYADLIIPEGGHNDKALYVLSTFLKSLSKEGLDFV.

9-16 is an ATP binding site; it reads GGSGSGKT.

It belongs to the uridine kinase family.

It is found in the cytoplasm. The enzyme catalyses uridine + ATP = UMP + ADP + H(+). It catalyses the reaction cytidine + ATP = CMP + ADP + H(+). It participates in pyrimidine metabolism; CTP biosynthesis via salvage pathway; CTP from cytidine: step 1/3. Its pathway is pyrimidine metabolism; UMP biosynthesis via salvage pathway; UMP from uridine: step 1/1. The polypeptide is Uridine kinase (Borrelia garinii subsp. bavariensis (strain ATCC BAA-2496 / DSM 23469 / PBi) (Borreliella bavariensis)).